The chain runs to 478 residues: Bifunctional protein HldE (478 aa).

Residues 1–318 (MKVTLPDFRQ…ENAIRGRADT (318 aa)) form a ribokinase region. Position 195 to 198 (195 to 198 (NLSE)) interacts with ATP. Residue Asp-264 is part of the active site. A cytidylyltransferase region spans residues 344–478 (MTNGCFDILH…NTIKANASKS (135 aa)).

In the N-terminal section; belongs to the carbohydrate kinase PfkB family. This sequence in the C-terminal section; belongs to the cytidylyltransferase family. In terms of assembly, homodimer.

The catalysed reaction is D-glycero-beta-D-manno-heptose 7-phosphate + ATP = D-glycero-beta-D-manno-heptose 1,7-bisphosphate + ADP + H(+). It catalyses the reaction D-glycero-beta-D-manno-heptose 1-phosphate + ATP + H(+) = ADP-D-glycero-beta-D-manno-heptose + diphosphate. It participates in nucleotide-sugar biosynthesis; ADP-L-glycero-beta-D-manno-heptose biosynthesis; ADP-L-glycero-beta-D-manno-heptose from D-glycero-beta-D-manno-heptose 7-phosphate: step 1/4. Its pathway is nucleotide-sugar biosynthesis; ADP-L-glycero-beta-D-manno-heptose biosynthesis; ADP-L-glycero-beta-D-manno-heptose from D-glycero-beta-D-manno-heptose 7-phosphate: step 3/4. Functionally, catalyzes the phosphorylation of D-glycero-D-manno-heptose 7-phosphate at the C-1 position to selectively form D-glycero-beta-D-manno-heptose-1,7-bisphosphate. Catalyzes the ADP transfer from ATP to D-glycero-beta-D-manno-heptose 1-phosphate, yielding ADP-D-glycero-beta-D-manno-heptose. This is Bifunctional protein HldE from Pectobacterium carotovorum subsp. carotovorum (strain PC1).